The sequence spans 180 residues: uncharacterized protein (180 aa).

Belongs to the CdaR family.

This is an uncharacterized protein from Thermomonospora curvata.